The following is an 823-amino-acid chain: MMLHNAKASDNNELDQAKPLIPQLSDKQKEALNDACGRIAPTWPLDELIAVNPWWEMRDQHISKVSAKLSALSQAQCVMPKSYFQEVWMETLQPQHVQQAIDEMEKDYTVDNLERYLLEEDEHTHWHNVSDFVDSGRDRKYKMAWRDEITHQISQFCADFFRLKDSQGTFSKTYQGLYHEWLATTRQDKGIEILMGEDGLTEHFMDLPESSESLLAEALVGLRVPDSQIADYAHALLLDANGWASWVAYLRWQDRLSNAENDLMMDFLAIRVAWEWVLWQHQKDSDRSVFNELKVMWHHQMSILPDLIATHEAAQAKSWIWQRAAEIAYQSELQQQLKHASRTDQKVETESPPVLLQAAFCIDVRSEVIRRALEAQDSRVETLGFAGFFGLPIEYQPAGTDVSRPQLPGLLKSGIKVTPVMTKVSKGATKQALNRKARWIEWGNAPPATFSMVEATGLMYAFKLLRNSLFPESHTNPINAIPATDAFELTQNDSPLTLDQKVELAAGILHAMGLDHDLAETVMLVGHGSTSCNNPHAAGLDCGACGGQTGEINVRVLAFLLNDESVRQGLLEKDIKIPAQTRFVAAMHNTTTDEFTCFGLNHVDETIQKWLARATEFARQERSTRLGLNHLEGQNLHQSIQRRAKDWSQVRPEWGLSNNAAFIVAPRARTRGVDFQGRAFLHDYDWQQDADNSLLTLIMTAPMVVTNWINLQYYASVCDNHVYGSGNKVLHNVVDGCIGVFEGNGGDLRIGLPMQSLHNGEKWMHEPLRLSVYIDAPQKTIAQVVAENDVVRHLIDNEWLYCFSWAPDGRIHRYFNNQWLESA.

4 residues coordinate Zn(2+): Cys361, Asp363, His527, and Cys542.

It belongs to the inorganic carbon transporter (TC 9.A.2) DabA family. In terms of assembly, forms a complex with DabB. Zn(2+) serves as cofactor.

Its subcellular location is the cell inner membrane. Its activity is regulated as follows. Intracellular DIC accumulation is sensitive to CCCP (carbonyl cyanide-m-chlorophenylhydrazone) and DCCD (N,N-dicyclohexylcarbodiimide) and therefore likely driven by either proton potential, ATP, or both. In terms of biological role, part of an energy-coupled inorganic carbon pump. Probably involved in transport of dissolved inorganic carbon (DIC) with upstream gene dabB (Tcr_0853); has been suggested to be a proton-DIC symporter. In Hydrogenovibrio crunogenus (strain DSM 25203 / XCL-2) (Thiomicrospira crunogena), this protein is Probable inorganic carbon transporter subunit DabA.